The chain runs to 143 residues: Actin-depolymerizing factor 5 (143 aa).

Residues 11–143 form the ADF-H domain; the sequence is GMNVKEECQR…GYDVIRGRAQ (133 aa).

Belongs to the actin-binding proteins ADF family.

Functionally, actin-depolymerizing protein. Severs actin filaments (F-actin) and binds to actin monomers. The protein is Actin-depolymerizing factor 5 (ADF5) of Oryza sativa subsp. japonica (Rice).